An 826-amino-acid chain; its full sequence is Lon protease (826 aa).

Over residues 1–20 (MSEEELNNRDTESKQEHDEN) the composition is skewed to basic and acidic residues. Residues 1–27 (MSEEELNNRDTESKQEHDENNSNFEAG) are disordered. The region spanning 33 to 231 (LPVLPLREVI…KVHALLEKEL (199 aa)) is the Lon N-terminal domain. Residue 384-391 (GPPGVGKT) coordinates ATP. The 182-residue stretch at 620 to 801 (ENLVGMTTGL…SEALTFTLAE (182 aa)) folds into the Lon proteolytic domain. Active-site residues include S707 and K750.

This sequence belongs to the peptidase S16 family. In terms of assembly, homohexamer. Organized in a ring with a central cavity.

It is found in the cytoplasm. The enzyme catalyses Hydrolysis of proteins in presence of ATP.. Functionally, ATP-dependent serine protease that mediates the selective degradation of mutant and abnormal proteins as well as certain short-lived regulatory proteins. Required for cellular homeostasis and for survival from DNA damage and developmental changes induced by stress. Degrades polypeptides processively to yield small peptide fragments that are 5 to 10 amino acids long. Binds to DNA in a double-stranded, site-specific manner. This is Lon protease from Neorickettsia sennetsu (strain ATCC VR-367 / Miyayama) (Ehrlichia sennetsu).